A 291-amino-acid polypeptide reads, in one-letter code: Urease accessory protein UreD (291 aa).

This sequence belongs to the UreD family. UreD, UreF and UreG form a complex that acts as a GTP-hydrolysis-dependent molecular chaperone, activating the urease apoprotein by helping to assemble the nickel containing metallocenter of UreC. The UreE protein probably delivers the nickel.

Its subcellular location is the cytoplasm. Functionally, required for maturation of urease via the functional incorporation of the urease nickel metallocenter. In Acinetobacter baumannii (strain ATCC 17978 / DSM 105126 / CIP 53.77 / LMG 1025 / NCDC KC755 / 5377), this protein is Urease accessory protein UreD.